Reading from the N-terminus, the 293-residue chain is Pyridoxal 5'-phosphate synthase subunit PdxS (293 aa).

Asp23 is a D-ribose 5-phosphate binding site. Lys80 (schiff-base intermediate with D-ribose 5-phosphate) is an active-site residue. Residue Gly152 participates in D-ribose 5-phosphate binding. Arg164 serves as a coordination point for D-glyceraldehyde 3-phosphate. D-ribose 5-phosphate is bound by residues Gly213 and Gly234 to Ser235.

This sequence belongs to the PdxS/SNZ family. In terms of assembly, in the presence of PdxT, forms a dodecamer of heterodimers.

It catalyses the reaction aldehydo-D-ribose 5-phosphate + D-glyceraldehyde 3-phosphate + L-glutamine = pyridoxal 5'-phosphate + L-glutamate + phosphate + 3 H2O + H(+). It functions in the pathway cofactor biosynthesis; pyridoxal 5'-phosphate biosynthesis. In terms of biological role, catalyzes the formation of pyridoxal 5'-phosphate from ribose 5-phosphate (RBP), glyceraldehyde 3-phosphate (G3P) and ammonia. The ammonia is provided by the PdxT subunit. Can also use ribulose 5-phosphate and dihydroxyacetone phosphate as substrates, resulting from enzyme-catalyzed isomerization of RBP and G3P, respectively. In Chloroflexus aurantiacus (strain ATCC 29366 / DSM 635 / J-10-fl), this protein is Pyridoxal 5'-phosphate synthase subunit PdxS.